The primary structure comprises 198 residues: Large ribosomal subunit protein bL25 (198 aa).

It belongs to the bacterial ribosomal protein bL25 family. CTC subfamily. As to quaternary structure, part of the 50S ribosomal subunit; part of the 5S rRNA/L5/L18/L25 subcomplex. Contacts the 5S rRNA. Binds to the 5S rRNA independently of L5 and L18.

In terms of biological role, this is one of the proteins that binds to the 5S RNA in the ribosome where it forms part of the central protuberance. The chain is Large ribosomal subunit protein bL25 from Chlorobium phaeobacteroides (strain DSM 266 / SMG 266 / 2430).